A 191-amino-acid polypeptide reads, in one-letter code: NAD(P)H-dependent FMN reductase LOT6 (191 aa).

FMN contacts are provided by residues R11, 94–97 (QYNW), and Y124.

As to quaternary structure, homodimer.

It localises to the cytoplasm. The protein localises to the nucleus. The catalysed reaction is FMNH2 + NADP(+) = FMN + NADPH + 2 H(+). The enzyme catalyses FMNH2 + NAD(+) = FMN + NADH + 2 H(+). Functionally, has several reductase activities that are NAD(P)H-dependent and involve FMN as a cofactor, ferricyanide being the best substrate for reduction. May be involved in ferric iron assimilation. This Saccharomyces cerevisiae (strain ATCC 204508 / S288c) (Baker's yeast) protein is NAD(P)H-dependent FMN reductase LOT6 (LOT6).